The primary structure comprises 182 residues: Bifunctional protein PyrR (182 aa).

A PRPP-binding motif is present at residues 100 to 112 (VVLVDDVLYTGRT).

This sequence belongs to the purine/pyrimidine phosphoribosyltransferase family. PyrR subfamily. In terms of assembly, homodimer and homohexamer; in equilibrium.

It carries out the reaction UMP + diphosphate = 5-phospho-alpha-D-ribose 1-diphosphate + uracil. Its function is as follows. Regulates transcriptional attenuation of the pyrimidine nucleotide (pyr) operon by binding in a uridine-dependent manner to specific sites on pyr mRNA. This disrupts an antiterminator hairpin in the RNA and favors formation of a downstream transcription terminator, leading to a reduced expression of downstream genes. Functionally, also displays a weak uracil phosphoribosyltransferase activity which is not physiologically significant. This chain is Bifunctional protein PyrR, found in Natranaerobius thermophilus (strain ATCC BAA-1301 / DSM 18059 / JW/NM-WN-LF).